We begin with the raw amino-acid sequence, 173 residues long: Cyclic pyranopterin monophosphate synthase (173 aa).

Residues 75-77 (MCH) and 117-118 (ME) contribute to the substrate site. The active site involves Asp-132. The segment at 152–173 (SGGKSGHYQRENSSVGGFANEQ) is disordered. The segment covering 162–173 (ENSSVGGFANEQ) has biased composition (polar residues).

This sequence belongs to the MoaC family. Homohexamer; trimer of dimers.

The catalysed reaction is (8S)-3',8-cyclo-7,8-dihydroguanosine 5'-triphosphate = cyclic pyranopterin phosphate + diphosphate. It participates in cofactor biosynthesis; molybdopterin biosynthesis. Its function is as follows. Catalyzes the conversion of (8S)-3',8-cyclo-7,8-dihydroguanosine 5'-triphosphate to cyclic pyranopterin monophosphate (cPMP). This Geobacillus sp. (strain WCH70) protein is Cyclic pyranopterin monophosphate synthase.